The following is an 874-amino-acid chain: Probable inorganic carbon transporter subunit DabA (874 aa).

Residues Cys398, Asp400, His580, and Cys595 each contribute to the Zn(2+) site.

This sequence belongs to the inorganic carbon transporter (TC 9.A.2) DabA family. Forms a complex with DabB. Requires Zn(2+) as cofactor.

It is found in the cell membrane. In terms of biological role, part of an energy-coupled inorganic carbon pump. The polypeptide is Probable inorganic carbon transporter subunit DabA (Bacillus cereus (strain AH187)).